The chain runs to 175 residues: ATP-dependent protease subunit HslV (175 aa).

Residue Thr-5 is part of the active site. The Na(+) site is built by Gly-160, Asp-163, and Thr-166.

The protein belongs to the peptidase T1B family. HslV subfamily. In terms of assembly, a double ring-shaped homohexamer of HslV is capped on each side by a ring-shaped HslU homohexamer. The assembly of the HslU/HslV complex is dependent on binding of ATP.

The protein localises to the cytoplasm. The catalysed reaction is ATP-dependent cleavage of peptide bonds with broad specificity.. With respect to regulation, allosterically activated by HslU binding. Functionally, protease subunit of a proteasome-like degradation complex believed to be a general protein degrading machinery. This chain is ATP-dependent protease subunit HslV, found in Myxococcus xanthus.